Reading from the N-terminus, the 700-residue chain is Ribonucleoside-diphosphate reductase subunit alpha (700 aa).

Substrate contacts are provided by residues T153, 169–170 (SC), G198, 380–384 (NLCSE), and 580–584 (PTGSI). A disulfide bridge connects residues C170 and C409. N380 acts as the Proton acceptor in catalysis. Catalysis depends on C382, which acts as the Cysteine radical intermediate. The active-site Proton acceptor is E384.

This sequence belongs to the ribonucleoside diphosphate reductase large chain family. Tetramer of two alpha and two beta subunits.

The enzyme catalyses a 2'-deoxyribonucleoside 5'-diphosphate + [thioredoxin]-disulfide + H2O = a ribonucleoside 5'-diphosphate + [thioredoxin]-dithiol. Under complex allosteric control mediated by deoxynucleoside triphosphates and ATP binding. The type of nucleotide bound at the specificity site determines substrate preference. It seems probable that ATP makes the enzyme reduce CDP and UDP, dGTP favors ADP reduction and dTTP favors GDP reduction. Provides the precursors necessary for DNA synthesis. Catalyzes the biosynthesis of deoxyribonucleotides from the corresponding ribonucleotides. This is Ribonucleoside-diphosphate reductase subunit alpha from Bacillus subtilis (strain 168).